We begin with the raw amino-acid sequence, 485 residues long: dTDP-4-amino-4,6-dideoxy-D-glucose ammonia-lyase (485 aa).

The [4Fe-4S] cluster site is built by cysteine 141, cysteine 145, and cysteine 148.

The protein belongs to the radical SAM superfamily. DesII family. In terms of assembly, monomer. Requires [4Fe-4S] cluster as cofactor.

It carries out the reaction dTDP-4-amino-4,6-dideoxy-alpha-D-glucose + AH2 + S-adenosyl-L-methionine = dTDP-3-dehydro-4,6-dideoxy-alpha-D-glucose + 5'-deoxyadenosine + L-methionine + A + NH4(+) + H(+). Functionally, involved in the biosynthesis of dTDP-alpha-D-desosamine, a sugar found in several bacterial macrolide antibiotics. Catalyzes the SAM-dependent deamination of dTDP-4-amino-4,6-deoxyglucose (dTDP-viosamine) to yield dTDP-3-keto-4,6-deoxyglucose. It can also catalyze the oxidative dehydrogenation of the non-physiological substrate dTDP-D-quinovose to dTDP-3-keto-6-deoxy-d-glucose. It can also deaminate dTDP-3-amino-3,6-deoxyglucose. This Streptomyces venezuelae protein is dTDP-4-amino-4,6-dideoxy-D-glucose ammonia-lyase.